A 122-amino-acid polypeptide reads, in one-letter code: MRHRNGNRKLNRTSSHRAAMLRNMANSLLTHEAIVTTLPKAKELRRVVEPLITLGKKPSLANRRLAFDRTRDRDVVVKLFGDLGPRFTARNGGYVRVLKYGFRKGDNAPLALVELVDKPAAE.

This sequence belongs to the bacterial ribosomal protein bL17 family. In terms of assembly, part of the 50S ribosomal subunit. Contacts protein L32.

This is Large ribosomal subunit protein bL17 from Neisseria meningitidis serogroup B (strain ATCC BAA-335 / MC58).